The chain runs to 338 residues: L-serine dehydratase (338 aa).

Position 39 is an N6-(pyridoxal phosphate)lysine (Lys-39).

It belongs to the serine/threonine dehydratase family. The cofactor is pyridoxal 5'-phosphate.

Its subcellular location is the cytoplasm. The enzyme catalyses L-serine = pyruvate + NH4(+). The protein operates within carbohydrate biosynthesis; gluconeogenesis. The chain is L-serine dehydratase (SDL1) from Saccharomyces cerevisiae (Baker's yeast).